The chain runs to 448 residues: UPF0210 protein Pisl_0759 (448 aa).

Belongs to the UPF0210 family.

This is UPF0210 protein Pisl_0759 from Pyrobaculum islandicum (strain DSM 4184 / JCM 9189 / GEO3).